The sequence spans 302 residues: Rab effector Noc2 (302 aa).

The RabBD domain occupies glutamine 41–glycine 158. The FYVE-type zinc-finger motif lies at glycine 89–glutamate 146. Zn(2+) contacts are provided by cysteine 95, cysteine 98, cysteine 112, cysteine 115, cysteine 120, cysteine 123, cysteine 138, and cysteine 141. The tract at residues aspartate 174–tyrosine 302 is disordered. Polar residues predominate over residues threonine 185 to valine 197. The residue at position 248 (serine 248) is a Phosphoserine. Low complexity predominate over residues serine 258–serine 269.

As to quaternary structure, recruited to dense-core vesicles through specific interaction with RAB27A in endocrine cells. Interacts with RAB3A, RAB3B, RAB3C and RAB3D. Interacts with ZYX. Highly expressed in pancreatic islets. High to moderate expression in adrenal gland, pituitary gland and ovary.

It is found in the cytoplasm. The protein localises to the cytoplasmic vesicle. The protein resides in the secretory vesicle membrane. In terms of biological role, rab GTPase effector involved in the late steps of regulated exocytosis, both in endocrine and exocrine cells. Regulates the exocytosis of dense-core vesicles in neuroendocrine cells through interaction with RAB27A. Acts as a potential RAB3B effector protein in epithelial cells. This chain is Rab effector Noc2 (Rph3al), found in Mus musculus (Mouse).